Reading from the N-terminus, the 122-residue chain is uncharacterized protein (122 aa).

Positions 79-114 (VIEDVASAIKEMMESAAKDLDKIEEVIKESLEKYLR) form a coiled coil.

This is an uncharacterized protein from Archaeoglobus fulgidus (strain ATCC 49558 / DSM 4304 / JCM 9628 / NBRC 100126 / VC-16).